We begin with the raw amino-acid sequence, 933 residues long: Phospholipase SGR2 (933 aa).

Basic and acidic residues predominate over residues 1–14 (MEDRETHLGTREVN). The tract at residues 1-22 (MEDRETHLGTREVNETSPDLLK) is disordered. S444 is an active-site residue. 2 disordered regions span residues 475 to 517 (PDEE…GQDN) and 553 to 598 (RGGQ…ESVN). Polar residues predominate over residues 505–517 (QLNNPEKITGQDN). Residues 553–563 (RGGQEDDHHDS) show a composition bias toward basic and acidic residues. The stretch at 593–631 (DKESVNSNNEERIKLLQDEVNSLRSKVAQLLSENARILS) forms a coiled coil. Residues 669–868 (LEFKVDTFFA…ALFIIKHLYR (200 aa)) enclose the DDHD domain. A disordered region spans residues 871–903 (PDGPNSPTESTEGDDSPKDSSRPHSWIDRREAD). Residues 885–902 (DSPKDSSRPHSWIDRREA) are compositionally biased toward basic and acidic residues.

Forms oligomers. Expressed in roots, hypocotyls, leaves, stems and floral buds, and, at low levels, in siliques.

The protein localises to the vacuole membrane. Functionally, involved in vacuolar formation or function (e.g. formation of vacuolar membrane 'bulbs'). Required for amyloplast sedimentation in the endodermis during shoot gravitropism, which are thus acting as statoliths. Particularly important for the negative gravitropism leading to leaf movement observed in darkness. In Arabidopsis thaliana (Mouse-ear cress), this protein is Phospholipase SGR2 (SGR2).